We begin with the raw amino-acid sequence, 393 residues long: E3 ubiquitin-protein transferase RMND5B (393 aa).

M1 is modified (N-acetylmethionine). A LisH domain is found at 116-148 (QQQILQMAIVEHLYQQGMLSVAEELCQESTLNV). In terms of domain architecture, CTLH spans 155-212 (PFLELNRILEALHEQDLGPALEWAVSHRQRLLELNSSLEFKLHRLHFIRLLAGGPEKQ). The RING-Gid-type zinc finger occupies 338-379 (CPILRQQTSDSNPPIKLICGHVISRDALNKLINGGKLKCPYC).

Identified in the CTLH complex that contains GID4, RANBP9 and/or RANBP10, MKLN1, MAEA, RMND5A (or alternatively its paralog RMND5B), GID8, ARMC8, WDR26 and YPEL5. Within this complex, MAEA, RMND5A (or alternatively its paralog RMND5B), GID8, WDR26, and RANBP9 and/or RANBP10 form the catalytic core, while GID4, MKLN1, ARMC8 and YPEL5 have ancillary roles.

The protein resides in the cytoplasm. Its subcellular location is the cytosol. It catalyses the reaction S-ubiquitinyl-[E2 ubiquitin-conjugating enzyme]-L-cysteine + [acceptor protein]-L-lysine = [E2 ubiquitin-conjugating enzyme]-L-cysteine + N(6)-ubiquitinyl-[acceptor protein]-L-lysine.. Functionally, core component of the CTLH E3 ubiquitin-protein ligase complex that selectively accepts ubiquitin from UBE2H and mediates ubiquitination and subsequent proteasomal degradation of the transcription factor HBP1. MAEA and RMND5A are both required for catalytic activity of the CTLH E3 ubiquitin-protein ligase complex. Catalytic activity of the complex is required for normal cell proliferation. The CTLH E3 ubiquitin-protein ligase complex is not required for the degradation of enzymes involved in gluconeogenesis, such as FBP1. This chain is E3 ubiquitin-protein transferase RMND5B (Rmnd5b), found in Mus musculus (Mouse).